Here is a 795-residue protein sequence, read N- to C-terminus: Phenylalanine--tRNA ligase beta subunit (795 aa).

One can recognise a tRNA-binding domain in the interval 39 to 148 (ADEFHTVVVG…ADAPVGEDYR (110 aa)). One can recognise a B5 domain in the interval 401–476 (PKRDGITLRA…RVYGYNSIQA (76 aa)). Positions 454, 460, 463, and 464 each coordinate Mg(2+). Positions 701–794 (SRYPSIRRDL…LKSEFNATLR (94 aa)) constitute an FDX-ACB domain.

The protein belongs to the phenylalanyl-tRNA synthetase beta subunit family. Type 1 subfamily. In terms of assembly, tetramer of two alpha and two beta subunits. It depends on Mg(2+) as a cofactor.

Its subcellular location is the cytoplasm. It carries out the reaction tRNA(Phe) + L-phenylalanine + ATP = L-phenylalanyl-tRNA(Phe) + AMP + diphosphate + H(+). The chain is Phenylalanine--tRNA ligase beta subunit from Idiomarina loihiensis (strain ATCC BAA-735 / DSM 15497 / L2-TR).